Consider the following 178-residue polypeptide: Photosystem I assembly protein Ycf4 (178 aa).

2 helical membrane passes run 19–39 and 61–81; these read ILVA…SLSS and LVMG…WAVI.

Belongs to the Ycf4 family.

It localises to the cellular thylakoid membrane. Its function is as follows. Seems to be required for the assembly of the photosystem I complex. The polypeptide is Photosystem I assembly protein Ycf4 (Synechococcus sp. (strain WH7803)).